The primary structure comprises 376 residues: MLTYSHQNIDQSDIDTLTKALKDEILTGGKKVNEFEEALCEYMGVKHACVLNSATSALHLAYTALGVQEKIVLTTPLTFAATANAALMAGAKVEFIDIKNDGNIDEKKLEARLLKESENIGAISVVDFAGNSVEMDEISNLTKKYNIPLIDDASHALGALYKSEKVGKKADLSIFSFHPVKPITTFEGGAVVSDNEELIDKIKLLRSHGIVKKRLWDSDMVELGYNYRLSDVACALGINQLKKLDHNLEKREEIANFYDKEFEKNPYFSTIKIKDYKKSSRHLYPILLFPEFYCQKEELFESLLHAGIGVQVHYKPTYEFSFYKKLLGEIKLQNADNFYKAELSIPCHQEMNLKDAKFVKDTLFSILEKVKKGYCG.

Substrate is bound by residues Tyr-4, Glu-24–Thr-27, Ala-54, and Ser-176. At Lys-181 the chain carries N6-(pyridoxal phosphate)lysine. Residues Asn-226 and Gln-311–Tyr-314 each bind substrate.

Belongs to the DegT/DnrJ/EryC1 family.

The enzyme catalyses UDP-4-amino-4,6-dideoxy-N-acetyl-beta-L-altrosamine + 2-oxoglutarate = UDP-2-acetamido-2,6-dideoxy-beta-L-arabino-hex-4-ulose + L-glutamate. In terms of biological role, catalyzes the second step in the biosynthesis of pseudaminic acid, a sialic-acid-like sugar that is used to modify flagellin. Uses UDP-2-acetamido-2,6-dideoxy-beta-L-arabino-4-hexulose as substrate producing UDP-4-amino-4,6-dideoxy-beta-L-AltNAc. The protein is UDP-4-amino-4,6-dideoxy-N-acetyl-beta-L-altrosamine transaminase (pseC) of Campylobacter jejuni subsp. jejuni serotype O:2 (strain ATCC 700819 / NCTC 11168).